Reading from the N-terminus, the 521-residue chain is Protein translocase subunit SecD (521 aa).

Helical transmembrane passes span 8 to 28, 359 to 379, 388 to 408, 410 to 430, 459 to 479, and 483 to 503; these read LKLASVLGVCLLGLLLCLPNG, AGILSLGVGFLLVVVFMVLFY, IALLANLVLMVAILSLFEATL, LPGMAGMLLTLGMAVDANILI, IVDSNATAFLAHVMLFVFGTG, and GFALTITIGIATTLFTTLLLS.

Belongs to the SecD/SecF family. SecD subfamily. Forms a complex with SecF. Part of the essential Sec protein translocation apparatus which comprises SecA, SecYEG and auxiliary proteins SecDF-YajC and YidC.

The protein localises to the cell inner membrane. Functionally, part of the Sec protein translocase complex. Interacts with the SecYEG preprotein conducting channel. SecDF uses the proton motive force (PMF) to complete protein translocation after the ATP-dependent function of SecA. This chain is Protein translocase subunit SecD, found in Acetobacter pasteurianus (strain NBRC 105184 / IFO 3283-01).